Consider the following 978-residue polypeptide: Glycine dehydrogenase (decarboxylating) (978 aa).

Residue Lys726 is modified to N6-(pyridoxal phosphate)lysine.

The protein belongs to the GcvP family. The glycine cleavage system is composed of four proteins: P, T, L and H. The cofactor is pyridoxal 5'-phosphate.

The enzyme catalyses N(6)-[(R)-lipoyl]-L-lysyl-[glycine-cleavage complex H protein] + glycine + H(+) = N(6)-[(R)-S(8)-aminomethyldihydrolipoyl]-L-lysyl-[glycine-cleavage complex H protein] + CO2. The glycine cleavage system catalyzes the degradation of glycine. The P protein binds the alpha-amino group of glycine through its pyridoxal phosphate cofactor; CO(2) is released and the remaining methylamine moiety is then transferred to the lipoamide cofactor of the H protein. The protein is Glycine dehydrogenase (decarboxylating) of Paraburkholderia phytofirmans (strain DSM 17436 / LMG 22146 / PsJN) (Burkholderia phytofirmans).